We begin with the raw amino-acid sequence, 1299 residues long: GRB10-interacting GYF protein 2 (1299 aa).

Residue A2 is modified to N-acetylalanine. Residues S19, S26, and S30 each carry the phosphoserine modification. The 4EHP-binding motif motif lies at 40-50 (DYRYGREEMLA). An omega-N-methylarginine mark is found at R107, R118, and R120. Residues 112-131 (TVVGAPRGRSSSRGRGRGRG) form a disordered region. S139 is subject to Phosphoserine. 3 disordered regions span residues 147 to 195 (FGRG…RKHE), 214 to 247 (EDED…GWRE), and 266 to 433 (RGYR…VADV). R149 is subject to Omega-N-methylarginine. The span at 151 to 182 (GGREMHRSQSWEERGDRRFEKPGRKDVGRPNF) shows a compositional bias: basic and acidic residues. A phosphoserine mark is found at S160, S189, and S236. Over residues 225–247 (SRRDGERWRPHSPDGPRSAGWRE) the composition is skewed to basic and acidic residues. Positions 280–310 (DDRDSLPEWCLEDAEEEMGTFDSSGAFLSLK) match the DDX6 binding motif motif. Positions 289–298 (CLEDAEEEMG) are enriched in acidic residues. 2 stretches are compositionally biased toward basic and acidic residues: residues 312–329 (VQKE…RPVD) and 338–363 (EGSH…DRVG). Residues 369–392 (ETPQTSSSSARPGTPSDHQSQEAS) show a composition bias toward polar residues. Phosphothreonine is present on T382. S388 carries the post-translational modification Phosphoserine. The segment covering 393 to 414 (QFERKDEPKTEQTEKAEEETRM) has biased composition (basic and acidic residues). The 49-residue stretch at 533-581 (MQKWYYKDPQGEIQGPFNNQEMAEWFQAGYFTMSLLVKRACDESFQPLG) folds into the GYF domain. The segment at 547 to 563 (GPFNNQEMAEWFQAGYF) is required for GRB10-binding. S593 carries the post-translational modification Phosphoserine. Disordered stretches follow at residues 733–793 (KAAK…QEEA), 845–866 (EEAA…ENRL), 872–891 (AARL…EVQR), 917–936 (QLAQ…SNTT), 957–997 (ERQL…KPSG), 1009–1048 (EARQ…VWGS), and 1084–1112 (KEVG…NRQN). The interval 860 to 919 (RLEENRLRMEEEAARLRHEEEERKRKELEVQRQKELMRQRQQQQEALRRLQQQQQQQQLA) is required for interaction with SARS-CoV-2 non-structural protein 2 (nsp2). The span at 924 to 936 (PSSSTWGQQSNTT) shows a compositional bias: polar residues. The segment covering 957 to 972 (ERQLREEQRRQQRELM) has biased composition (basic and acidic residues). S993 is subject to Phosphoserine. Residues 1013–1025 (MQKQQQQQQQHQQ) show a composition bias toward low complexity. A compositionally biased stretch (polar residues) spans 1026–1048 (PNRARNNTHSNLHTSIGNSVWGS). Residues 1090 to 1104 (NSTNKNKNNASLSKS) show a composition bias toward low complexity. A Glycyl lysine isopeptide (Lys-Gly) (interchain with G-Cter in SUMO2) cross-link involves residue K1123. Disordered stretches follow at residues 1195-1230 (RAKQ…QQDS) and 1247-1271 (QSNN…KMVR). The span at 1202 to 1217 (QQRQQQQLPQQQQQQP) shows a compositional bias: low complexity. S1284 is modified (phosphoserine).

It belongs to the GIGYF family. In terms of assembly, component of the 4EHP-GYF2 complex, at least composed of EIF4E2, GIGYF2 and ZNF598. Interacts (via the 4EHP-binding motif) with EIF4E2; the interaction is direct. Interacts with ZFP36/TTP (via P-P-P-P-G repeats); the interaction is direct. Interacts with GRB10. Interacts (via DDX6 motif) with DDX6 (via RecA-like domain 2). As to quaternary structure, (Microbial infection) Interacts with SARS coronavirus-2/SARS-CoV-2 non-structural protein 2 (nsp2); the interaction enhances GIGYF2 binding to EIF4E2.

Its function is as follows. Key component of the 4EHP-GYF2 complex, a multiprotein complex that acts as a repressor of translation initiation. In the 4EHP-GYF2 complex, acts as a factor that bridges EIF4E2 to ZFP36/TTP, linking translation repression with mRNA decay. Also recruits and bridges the association of the 4EHP complex with the decapping effector protein DDX6, which is required for the ZFP36/TTP-mediated down-regulation of AU-rich mRNA. May act cooperatively with GRB10 to regulate tyrosine kinase receptor signaling, including IGF1 and insulin receptors. In association with EIF4E2, assists ribosome-associated quality control (RQC) by sequestering the mRNA cap, blocking ribosome initiation and decreasing the translational load on problematic messages. Part of a pathway that works in parallel to RQC-mediated degradation of the stalled nascent polypeptide. GIGYF2 and EIF4E2 work downstream and independently of ZNF598, which seems to work as a scaffold that can recruit them to faulty mRNA even if alternative recruitment mechanisms may exist. In terms of biological role, (Microbial infection) Upon SARS coronavirus-2/SARS-CoV-2 infection, the interaction with non-structural protein 2 (nsp2) enhances GIGYF2 binding to EIF4E2 and increases repression of translation initiation of genes involved in antiviral innate immune response such as IFNB1. The protein is GRB10-interacting GYF protein 2 of Homo sapiens (Human).